Reading from the N-terminus, the 166-residue chain is NADH-quinone oxidoreductase subunit E (166 aa).

4 residues coordinate [2Fe-2S] cluster: cysteine 92, cysteine 97, cysteine 133, and cysteine 137.

The protein belongs to the complex I 24 kDa subunit family. As to quaternary structure, composed of 13 different subunits. Subunits NuoCD, E, F, and G constitute the peripheral sector of the complex. It depends on [2Fe-2S] cluster as a cofactor.

It catalyses the reaction a quinone + NADH + 5 H(+)(in) = a quinol + NAD(+) + 4 H(+)(out). Functionally, NDH-1 shuttles electrons from NADH, via FMN and iron-sulfur (Fe-S) centers, to quinones in the respiratory chain. The immediate electron acceptor for the enzyme in this species is believed to be ubiquinone. Couples the redox reaction to proton translocation (for every two electrons transferred, four hydrogen ions are translocated across the cytoplasmic membrane), and thus conserves the redox energy in a proton gradient. This is NADH-quinone oxidoreductase subunit E (nuoE) from Pseudomonas aeruginosa (strain ATCC 15692 / DSM 22644 / CIP 104116 / JCM 14847 / LMG 12228 / 1C / PRS 101 / PAO1).